We begin with the raw amino-acid sequence, 283 residues long: Polyprenyl-phosphate transporter (283 aa).

9 helical membrane passes run 27–47 (GTIA…SGIF), 51–71 (FWPS…AMGS), 85–105 (IPTM…LLKI), 112–132 (FTTK…VITL), 148–168 (TSLI…MLLP), 169–189 (GISG…MLAI), 197–217 (FAGL…FIIS), 230–250 (LMTF…VFPG), and 255–275 (IVMW…SLTL).

The protein belongs to the PopT family.

Its subcellular location is the cell membrane. Active in alkaline conditions. Its function is as follows. Flippase that catalyzes the transport of undecaprenyl phosphate (UndP) across the cytoplasmic membrane, from the external side to the cytoplasmic side. Is involved in UndP recycling during peptidoglycan synthesis. Necessary for peptidoglycan maintenance. This chain is Polyprenyl-phosphate transporter, found in Staphylococcus aureus (strain NCTC 8325 / PS 47).